The primary structure comprises 356 residues: Inositol phosphoceramide mannosyltransferase 3 (356 aa).

The helical transmembrane segment at Ile4–Gly24 threads the bilayer. 2 N-linked (GlcNAc...) asparagine glycosylation sites follow: Asn52 and Asn146. A run of 2 helical transmembrane segments spans residues Phe197–Ala217 and Trp269–Gly289. 3 positions are modified to phosphoserine: Ser307, Ser353, and Ser355.

Belongs to the glycosyltransferase 32 family.

It localises to the endoplasmic reticulum membrane. The protein resides in the golgi apparatus. It is found in the cis-Golgi network membrane. Its subcellular location is the trans-Golgi network membrane. In terms of biological role, with imt1 and imt2, is required for the synthesis of mannosylinositol phosphoceramide (MIPC). Catalyzes the addition of mannosyl to inositol phosphoceramide (IPC). MIPC is essential for cell morphology, cell-surface distribution of ergosterol, localization for plasma-membrane transporters, and lipid-raft-mediated endocytosis of plasma membrane proteins to the vacuole. The chain is Inositol phosphoceramide mannosyltransferase 3 from Schizosaccharomyces pombe (strain 972 / ATCC 24843) (Fission yeast).